The chain runs to 216 residues: V-type ATP synthase subunit D (216 aa).

The protein belongs to the V-ATPase D subunit family.

Produces ATP from ADP in the presence of a proton gradient across the membrane. The sequence is that of V-type ATP synthase subunit D from Clostridium botulinum (strain ATCC 19397 / Type A).